The sequence spans 92 residues: Putative pterin-4-alpha-carbinolamine dehydratase (92 aa).

It belongs to the pterin-4-alpha-carbinolamine dehydratase family.

The enzyme catalyses (4aS,6R)-4a-hydroxy-L-erythro-5,6,7,8-tetrahydrobiopterin = (6R)-L-erythro-6,7-dihydrobiopterin + H2O. The protein is Putative pterin-4-alpha-carbinolamine dehydratase of Haloarcula marismortui (strain ATCC 43049 / DSM 3752 / JCM 8966 / VKM B-1809) (Halobacterium marismortui).